The primary structure comprises 495 residues: Serine/threonine-protein kinase STN8, chloroplastic (495 aa).

Residues 1-49 (MASLLSPATPTATSAAFHSCSTAGFSTPTHISSQNSSLSLLSRRGCMMR) constitute a chloroplast transit peptide. The 345-residue stretch at 133–477 (FLVTEKLGEG…AAAALRHPYF (345 aa)) folds into the Protein kinase domain. ATP is bound by residues 139–147 (LGEGSFGVV) and lysine 186. The Proton acceptor role is filled by aspartate 308.

The protein belongs to the protein kinase superfamily. Ser/Thr protein kinase family.

The protein localises to the plastid. The protein resides in the chloroplast thylakoid. It catalyses the reaction L-seryl-[protein] + ATP = O-phospho-L-seryl-[protein] + ADP + H(+). The catalysed reaction is L-threonyl-[protein] + ATP = O-phospho-L-threonyl-[protein] + ADP + H(+). Functionally, light-dependent serine/threonine protein kinase that specifically phosphorylates N-terminal threonine residues in psbA/D1, psbD/D2, psbC/CP43 and psbH, which are components of the core antenna complex of photosystem II. Phosphorylation of PSII core components facilitates the exchange of chlorophyll proteins between the grana and the stroma lamellae. Also involved in the phosphorylation of the calcium-sensing receptor (CaS). This is Serine/threonine-protein kinase STN8, chloroplastic (STN8) from Arabidopsis thaliana (Mouse-ear cress).